The chain runs to 95 residues: Small ribosomal subunit protein uS19 (95 aa).

Residues 76–95 are disordered; the sequence is PTRRFGGHADKKAATKGQVR.

It belongs to the universal ribosomal protein uS19 family.

In terms of biological role, protein S19 forms a complex with S13 that binds strongly to the 16S ribosomal RNA. In Pseudothermotoga lettingae (strain ATCC BAA-301 / DSM 14385 / NBRC 107922 / TMO) (Thermotoga lettingae), this protein is Small ribosomal subunit protein uS19.